The sequence spans 348 residues: GTPase Obg 1 (348 aa).

An Obg domain is found at 1–159; the sequence is MSFVDEAKIH…HCVLLKLKIV (159 aa). The OBG-type G domain maps to 160-329; that stretch reads SDVGIIGMPN…LHAQVKKAVV (170 aa). GTP contacts are provided by residues 166 to 173, 191 to 195, 212 to 215, 279 to 282, and 310 to 312; these read GMPNAGKS, FTTLE, DIPG, NKCD, and GDE. Positions 173 and 193 each coordinate Mg(2+).

It belongs to the TRAFAC class OBG-HflX-like GTPase superfamily. OBG GTPase family. As to quaternary structure, monomer. It depends on Mg(2+) as a cofactor.

It is found in the cytoplasm. Its function is as follows. An essential GTPase which binds GTP, GDP and possibly (p)ppGpp with moderate affinity, with high nucleotide exchange rates and a fairly low GTP hydrolysis rate. Plays a role in control of the cell cycle, stress response, ribosome biogenesis and in those bacteria that undergo differentiation, in morphogenesis control. The sequence is that of GTPase Obg 1 from Anaplasma marginale (strain Florida).